The chain runs to 240 residues: UDP-2,3-diacylglucosamine hydrolase (240 aa).

Asp7, His9, Asp40, Asn78, and His113 together coordinate Mn(2+). Asn78–Arg79 is a substrate binding site. Asp121, Ser159, Thr163, Lys166, and His194 together coordinate substrate. Mn(2+) is bound by residues His194 and His196.

The protein belongs to the LpxH family. Mn(2+) serves as cofactor.

The protein localises to the cell inner membrane. It catalyses the reaction UDP-2-N,3-O-bis[(3R)-3-hydroxytetradecanoyl]-alpha-D-glucosamine + H2O = 2-N,3-O-bis[(3R)-3-hydroxytetradecanoyl]-alpha-D-glucosaminyl 1-phosphate + UMP + 2 H(+). It functions in the pathway glycolipid biosynthesis; lipid IV(A) biosynthesis; lipid IV(A) from (3R)-3-hydroxytetradecanoyl-[acyl-carrier-protein] and UDP-N-acetyl-alpha-D-glucosamine: step 4/6. Its function is as follows. Hydrolyzes the pyrophosphate bond of UDP-2,3-diacylglucosamine to yield 2,3-diacylglucosamine 1-phosphate (lipid X) and UMP by catalyzing the attack of water at the alpha-P atom. Involved in the biosynthesis of lipid A, a phosphorylated glycolipid that anchors the lipopolysaccharide to the outer membrane of the cell. The protein is UDP-2,3-diacylglucosamine hydrolase of Pseudomonas entomophila (strain L48).